We begin with the raw amino-acid sequence, 766 residues long: 5-methyltetrahydropteroyltriglutamate--homocysteine methyltransferase (766 aa).

Residues 16 to 19 (RELK) and Lys-124 contribute to the 5-methyltetrahydropteroyltri-L-glutamate site. Residues 445-447 (IGS) and Glu-498 contribute to the L-homocysteine site. L-methionine-binding positions include 445–447 (IGS) and Glu-498. 5-methyltetrahydropteroyltri-L-glutamate is bound by residues 529–530 (RC) and Trp-575. Asp-613 is an L-homocysteine binding site. Asp-613 contributes to the L-methionine binding site. Glu-619 serves as a coordination point for 5-methyltetrahydropteroyltri-L-glutamate. Residues His-655, Cys-657, and Glu-679 each contribute to the Zn(2+) site. The active-site Proton donor is His-708. Position 740 (Cys-740) interacts with Zn(2+).

The protein belongs to the vitamin-B12 independent methionine synthase family. Zn(2+) serves as cofactor.

The catalysed reaction is 5-methyltetrahydropteroyltri-L-glutamate + L-homocysteine = tetrahydropteroyltri-L-glutamate + L-methionine. It participates in amino-acid biosynthesis; L-methionine biosynthesis via de novo pathway; L-methionine from L-homocysteine (MetE route): step 1/1. Its function is as follows. Catalyzes the transfer of a methyl group from 5-methyltetrahydrofolate to homocysteine resulting in methionine formation. The polypeptide is 5-methyltetrahydropteroyltriglutamate--homocysteine methyltransferase (Pseudomonas syringae pv. tomato (strain ATCC BAA-871 / DC3000)).